A 358-amino-acid polypeptide reads, in one-letter code: MLPDAKLDILLARHAALEAELLGQLNAEAYVRATRELAELTPVVDAVKAYRAGASELSDLDAMIDDPTTDAEMRAMAESERPVLQERQENLEQQIRIALLPKDAMDERNVVLEVRAGTGGDEASLFAGDLFRMYERFAALQGWKVEVISASEGTVGGYKEIVAQVQGRGAFAKLKFESGVHRVQRVPDTEASGRIHTSAATVAVLPEAEEIDIDIKDTDLRIETMRAQGAGGQHVNKTESAIRITHIPTGIVVMMQDSRSQHKNRASAMNILRSRILDAERQRAASERSADRRGQVGSGDRSERVRTYNFPQGRVTDHRINLTLYKLPQVIAGEALNELIDALTTEHQAALLATETSA.

Position 233 is an N5-methylglutamine (Gln-233). Residues 282-306 are compositionally biased toward basic and acidic residues; that stretch reads QRAASERSADRRGQVGSGDRSERVR. Residues 282-308 are disordered; sequence QRAASERSADRRGQVGSGDRSERVRTY.

It belongs to the prokaryotic/mitochondrial release factor family. Post-translationally, methylated by PrmC. Methylation increases the termination efficiency of RF1.

Its subcellular location is the cytoplasm. Peptide chain release factor 1 directs the termination of translation in response to the peptide chain termination codons UAG and UAA. This chain is Peptide chain release factor 1, found in Afipia carboxidovorans (strain ATCC 49405 / DSM 1227 / KCTC 32145 / OM5) (Oligotropha carboxidovorans).